Here is a 52-residue protein sequence, read N- to C-terminus: Phospholamban (52 aa).

Methionine 1 bears the N-acetylmethionine mark. The Cytoplasmic segment spans residues 1-31; sequence MEKVQYLTRSAIRRASTIEMPQQARQNLQNL. Residue serine 16 is modified to Phosphoserine; by PKA. A Phosphothreonine; by CaMK2 modification is found at threonine 17. A helical membrane pass occupies residues 32–52; sequence FINFCLILICLLLICIIVMLL. A lipid anchor (S-palmitoyl cysteine) is attached at cysteine 36.

Belongs to the phospholamban family. Homopentamer. Can also form heterooligomers with other sarcoplasmic/endoplasmic reticulum calcium ATPase (SERCA) regulators ARLN, ERLN, SLN and STRIT1/DWORF. Monomer. Interacts with HAX1. Interacts as a monomer with ATP2A2; the interaction decreases ATP2A2 Ca(2+) affinity. Interacts with VMP1; VMP1 competes with PLN and SLN to prevent them from forming an inhibitory complex with ATP2A2. Interacts with S100A1 in a Ca(2+)-dependent manner. In terms of processing, phosphorylated at Thr-17 by CaMK2, and in response to beta-adrenergic stimulation. Phosphorylation by DMPK may stimulate sarcoplasmic reticulum calcium uptake in cardiomyocytes. Phosphorylation by PKA abolishes the inhibition of ATP2A2-mediated calcium uptake. Post-translationally, palmitoylated by ZDHHC16, promoting formation of the homopentamer. In elongated spermatids, proteolytically cleaved by SPPL2C which modulates intracellular Ca(2+) homeostasis. In terms of tissue distribution, expressed in testis (at protein level). In brain, expressed specifically in GABAergic GAD67+ neurons of the thalamic reticular nucleus where it colocalizes with ATP2A2/SERCA2 (at protein level). Expressed in the bladder and in the atria and ventricles of the heart.

It is found in the endoplasmic reticulum membrane. The protein resides in the sarcoplasmic reticulum membrane. The protein localises to the mitochondrion membrane. Its subcellular location is the membrane. Its function is as follows. Reversibly inhibits the activity of ATP2A2/SERCA2 in cardiac sarcoplasmic reticulum by decreasing the apparent affinity of the ATPase for Ca(2+). Binds preferentially to the ATP-bound E1 conformational form of ATP2A2 which predominates at low Ca(2+) concentrations during the diastolic phase of the cardiac cycle. Inhibits ATP2A2 Ca(2+) affinity by disrupting its allosteric activation by ATP. Modulates the contractility of the heart muscle in response to physiological stimuli via its effects on ATP2A2. Modulates calcium re-uptake during muscle relaxation and plays an important role in calcium homeostasis in the heart muscle. The degree of ATP2A2 inhibition depends on the oligomeric state of PLN. ATP2A2 inhibition is alleviated by PLN phosphorylation. Also inhibits the activity of ATP2A3/SERCA3. Controls intracellular Ca(2+) levels in elongated spermatids and may play a role in germ cell differentiation. In the thalamic reticular nucleus of the brain, plays a role in the regulation of sleep patterns and executive functioning. This is Phospholamban from Mus musculus (Mouse).